Consider the following 291-residue polypeptide: 2-dehydro-3-deoxyphosphooctonate aldolase 2 (291 aa).

Alanine 2 bears the N-acetylalanine mark.

It belongs to the KdsA family. As to expression, expressed in roots, apical meristem, emerging leaves, hydathodes of young leaves, styles of mature flowers and funicules of mature siliques.

It localises to the cytoplasm. The catalysed reaction is D-arabinose 5-phosphate + phosphoenolpyruvate + H2O = 3-deoxy-alpha-D-manno-2-octulosonate-8-phosphate + phosphate. Catalyzes the stereospecific condensation of D-arabinose 5-phosphate and phosphoenolpyruvate to form 3-deoxy-D-manno-octulosonate 8-phosphate (KDO-8-phosphate) and inorganic phosphate. Involved in the biosynthesis of 3-deoxy-D-manno-octulosonate (KDO) which is an indispensable component of rhamnogalacturonan II (RG-II), a structurally complex pectic polysaccharide of the primary cell wall. RG-II is essential for the cell wall integrity of rapidly growing tissues and pollen tube growth and elongation. This Arabidopsis thaliana (Mouse-ear cress) protein is 2-dehydro-3-deoxyphosphooctonate aldolase 2 (KDSA2).